We begin with the raw amino-acid sequence, 404 residues long: Cytochrome b561 and DOMON domain-containing protein At5g35735 (404 aa).

The signal sequence occupies residues 1–25 (MDRTQSPKTALFAVLATLLVLTVNG). The region spanning 49–164 (LGSFLHWTYN…ITANQLWQVG (116 aa)) is the DOMON domain. A Cytochrome b561 domain is found at 170–369 (VPASHQTSGD…LEPLTWFIVL (200 aa)). Positions 172–207 (ASHQTSGDNMRSSGRIDFRTGQASAGGGGSGDRLRK) are disordered. Residues 173 to 183 (SHQTSGDNMRS) show a composition bias toward polar residues. Transmembrane regions (helical) follow at residues 210 to 230 (THGV…AMMA) and 241 to 261 (WFYL…AGWA). 3 residues coordinate heme b: histidine 211, histidine 245, and histidine 278. A helical membrane pass occupies residues 280–300 (NLGIALFTFATLQVFALLVRP). Histidine 314 is a heme b binding site. A run of 2 helical transmembrane segments spans residues 316–336 (TVGY…FDIL) and 349–369 (ILIF…FIVL). Positions 376–404 (GNTVAAPTSSKYSNGVNGTTTTGPHHQDA) are disordered. Over residues 380–404 (AAPTSSKYSNGVNGTTTTGPHHQDA) the composition is skewed to polar residues.

Heme b is required as a cofactor.

The protein resides in the membrane. May act as a catecholamine-responsive trans-membrane electron transporter. The chain is Cytochrome b561 and DOMON domain-containing protein At5g35735 from Arabidopsis thaliana (Mouse-ear cress).